Reading from the N-terminus, the 938-residue chain is Histone deacetylase 7 (938 aa).

The tract at residues 1–40 (MHSPGAGCPALQPDTPGSQPQPMDLRVGQRPTVEPPPEPA) is disordered. The segment at 1–121 (MHSPGAGCPA…LAEVILKKQQ (121 aa)) is interaction with MEF2C. Transcription repression stretches follow at residues 2 to 254 (HSPG…DGDR) and 241 to 533 (GPNP…EHAG). The interaction with MEF2A stretch occupies residues 72–172 (SMDPPMPELQ…LPTEPPEHFP (101 aa)). Position 132 is a phosphoserine (S132). Disordered regions lie at residues 155 to 280 (SFLP…HHGL), 331 to 361 (SGSG…APLQ), 373 to 463 (LIKP…DSVL), and 472 to 491 (RPLS…LSPE). Phosphoserine; by MARK2, MARK3 and PKD/PRKD1 is present on S178. Residues 190–204 (KSLERRKNPLLRKES) are compositionally biased toward basic and acidic residues. A Phosphoserine; by PKD/PRKD2 modification is found at S204. Residues 220–235 (SSPSSSSTPASGCSSP) show a composition bias toward low complexity. At S344 the chain carries Phosphoserine; by PKD/PRKD1. Phosphoserine is present on residues S350 and S398. Over residues 350-361 (SATASPLLAPLQ) the composition is skewed to low complexity. Low complexity-rich tracts occupy residues 429 to 448 (GRGS…EQQH) and 479 to 491 (SSPA…LSPE). S479 bears the Phosphoserine; by PKD/PRKD1 mark. S480 bears the Phosphoserine mark. Positions 505–852 (PATGLVYDSV…VAALLGNKVD (348 aa)) are histone deacetylase. Zn(2+)-binding residues include C520, C522, and H528. S582 carries the post-translational modification Phosphoserine. C605 is a binding site for Zn(2+). H657 is an active-site residue. An interaction with SIN3A region spans residues 864–938 (NLSAIRSLEA…LVEEEEPMNL (75 aa)). A Nuclear export signal motif is present at residues 904 to 938 (AEVEAVTALASLSVGILAEDRPSERLVEEEEPMNL).

It belongs to the histone deacetylase family. HD type 2 subfamily. In terms of assembly, interacts with HDAC1, HDAC2, HDAC3, HDAC4, HDAC5, NCOR1, NCOR2, SIN3A, SIN3B, RBBP4, RBBP7, MTA1L1, SAP30 and MBD3. Interacts with KAT5 and EDNRA. Interacts with the 14-3-3 protein YWHAE, MEF2A, MEF2B and MEF2C. Interacts with ZMYND15. Interacts with KDM5B. Interacts with PML. Interacts with FOXP3. Interacts with RARA. Post-translationally, may be phosphorylated by CaMK1. Phosphorylated by the PKC kinases PKN1 and PKN2, impairing nuclear import. Phosphorylation at Ser-178 by MARK2, MARK3 and PRKD1 promotes interaction with 14-3-3 proteins and export from the nucleus. Phosphorylation at Ser-178 is a prerequisite for phosphorylation at Ser-204. Highly expressed in heart and lung. Expressed at intermediate level in muscle.

The protein resides in the nucleus. It localises to the cytoplasm. It catalyses the reaction N(6)-acetyl-L-lysyl-[histone] + H2O = L-lysyl-[histone] + acetate. It carries out the reaction N(6)-acetyl-L-lysyl-[protein] + H2O = L-lysyl-[protein] + acetate. Its activity is regulated as follows. Its activity is inhibited by Trichostatin A (TSA), a known histone deacetylase inhibitor. In terms of biological role, responsible for the deacetylation of lysine residues on the N-terminal part of the core histones (H2A, H2B, H3 and H4). Histone deacetylation gives a tag for epigenetic repression and plays an important role in transcriptional regulation, cell cycle progression and developmental events. Histone deacetylases act via the formation of large multiprotein complexes. Involved in muscle maturation by repressing transcription of myocyte enhancer factors such as MEF2A, MEF2B and MEF2C. During muscle differentiation, it shuttles into the cytoplasm, allowing the expression of myocyte enhancer factors. Positively regulates the transcriptional repressor activity of FOXP3. Serves as a corepressor of RARA, causing its deacetylation and inhibition of RARE DNA element binding. In association with RARA, plays a role in the repression of microRNA-10a and thereby in the inflammatory response. Also acetylates non-histone proteins, such as ALKBH5. This is Histone deacetylase 7 (Hdac7) from Mus musculus (Mouse).